The sequence spans 275 residues: uncharacterized protein (275 aa).

NAD(+) is bound by residues 20 to 22 (RGQ), 41 to 42 (DI), 80 to 81 (DV), and asparagine 107. Serine 160 provides a ligand contact to substrate. Tyrosine 173 (proton acceptor) is an active-site residue. NAD(+) is bound by residues lysine 177 and 206-208 (VET).

It belongs to the short-chain dehydrogenases/reductases (SDR) family.

This is an uncharacterized protein from Mycolicibacterium paratuberculosis (strain ATCC BAA-968 / K-10) (Mycobacterium paratuberculosis).